The chain runs to 141 residues: Putative pre-16S rRNA nuclease (141 aa).

Belongs to the YqgF nuclease family.

It localises to the cytoplasm. Its function is as follows. Could be a nuclease involved in processing of the 5'-end of pre-16S rRNA. In Shewanella oneidensis (strain ATCC 700550 / JCM 31522 / CIP 106686 / LMG 19005 / NCIMB 14063 / MR-1), this protein is Putative pre-16S rRNA nuclease.